An 88-amino-acid polypeptide reads, in one-letter code: Large ribosomal subunit protein bL27 (88 aa).

A disordered region spans residues 1-24 (MAHKKGTGSTRNGRDSNSKRLGVK).

The protein belongs to the bacterial ribosomal protein bL27 family.

This chain is Large ribosomal subunit protein bL27, found in Prochlorococcus marinus (strain MIT 9303).